We begin with the raw amino-acid sequence, 156 residues long: Small ribosomal subunit protein uS7 (156 aa).

This sequence belongs to the universal ribosomal protein uS7 family. Part of the 30S ribosomal subunit. Contacts proteins S9 and S11.

In terms of biological role, one of the primary rRNA binding proteins, it binds directly to 16S rRNA where it nucleates assembly of the head domain of the 30S subunit. Is located at the subunit interface close to the decoding center, probably blocks exit of the E-site tRNA. This is Small ribosomal subunit protein uS7 from Acaryochloris marina (strain MBIC 11017).